Reading from the N-terminus, the 282-residue chain is Phosphatidylserine decarboxylase proenzyme (282 aa).

Residues Asp-85, His-142, and Ser-244 each act as charge relay system; for autoendoproteolytic cleavage activity in the active site. Ser-244 serves as the catalytic Schiff-base intermediate with substrate; via pyruvic acid; for decarboxylase activity. Residue Ser-244 is modified to Pyruvic acid (Ser); by autocatalysis.

The protein belongs to the phosphatidylserine decarboxylase family. PSD-B subfamily. Prokaryotic type I sub-subfamily. In terms of assembly, heterodimer of a large membrane-associated beta subunit and a small pyruvoyl-containing alpha subunit. Requires pyruvate as cofactor. Post-translationally, is synthesized initially as an inactive proenzyme. Formation of the active enzyme involves a self-maturation process in which the active site pyruvoyl group is generated from an internal serine residue via an autocatalytic post-translational modification. Two non-identical subunits are generated from the proenzyme in this reaction, and the pyruvate is formed at the N-terminus of the alpha chain, which is derived from the carboxyl end of the proenzyme. The autoendoproteolytic cleavage occurs by a canonical serine protease mechanism, in which the side chain hydroxyl group of the serine supplies its oxygen atom to form the C-terminus of the beta chain, while the remainder of the serine residue undergoes an oxidative deamination to produce ammonia and the pyruvoyl prosthetic group on the alpha chain. During this reaction, the Ser that is part of the protease active site of the proenzyme becomes the pyruvoyl prosthetic group, which constitutes an essential element of the active site of the mature decarboxylase.

It localises to the cell membrane. It carries out the reaction a 1,2-diacyl-sn-glycero-3-phospho-L-serine + H(+) = a 1,2-diacyl-sn-glycero-3-phosphoethanolamine + CO2. Its pathway is phospholipid metabolism; phosphatidylethanolamine biosynthesis; phosphatidylethanolamine from CDP-diacylglycerol: step 2/2. Catalyzes the formation of phosphatidylethanolamine (PtdEtn) from phosphatidylserine (PtdSer). This is Phosphatidylserine decarboxylase proenzyme from Coxiella burnetii (strain CbuG_Q212) (Coxiella burnetii (strain Q212)).